Here is a 601-residue protein sequence, read N- to C-terminus: Elongation factor 4 (601 aa).

The region spanning 6–188 is the tr-type G domain; that stretch reads SRTRNFSIIA…DIVKNVPPPK (183 aa). Residues 18–23 and 135–138 each bind GTP; these read DHGKST and NKID.

Belongs to the TRAFAC class translation factor GTPase superfamily. Classic translation factor GTPase family. LepA subfamily.

It is found in the cell membrane. It catalyses the reaction GTP + H2O = GDP + phosphate + H(+). Required for accurate and efficient protein synthesis under certain stress conditions. May act as a fidelity factor of the translation reaction, by catalyzing a one-codon backward translocation of tRNAs on improperly translocated ribosomes. Back-translocation proceeds from a post-translocation (POST) complex to a pre-translocation (PRE) complex, thus giving elongation factor G a second chance to translocate the tRNAs correctly. Binds to ribosomes in a GTP-dependent manner. The polypeptide is Elongation factor 4 (Clostridioides difficile (strain 630) (Peptoclostridium difficile)).